The sequence spans 256 residues: Thiazole synthase (256 aa).

K95 (schiff-base intermediate with DXP) is an active-site residue. 1-deoxy-D-xylulose 5-phosphate is bound by residues G156, 182-183, and 204-205; these read AG and NT.

The protein belongs to the ThiG family. As to quaternary structure, homotetramer. Forms heterodimers with either ThiH or ThiS.

The protein localises to the cytoplasm. The enzyme catalyses [ThiS sulfur-carrier protein]-C-terminal-Gly-aminoethanethioate + 2-iminoacetate + 1-deoxy-D-xylulose 5-phosphate = [ThiS sulfur-carrier protein]-C-terminal Gly-Gly + 2-[(2R,5Z)-2-carboxy-4-methylthiazol-5(2H)-ylidene]ethyl phosphate + 2 H2O + H(+). The protein operates within cofactor biosynthesis; thiamine diphosphate biosynthesis. Catalyzes the rearrangement of 1-deoxy-D-xylulose 5-phosphate (DXP) to produce the thiazole phosphate moiety of thiamine. Sulfur is provided by the thiocarboxylate moiety of the carrier protein ThiS. In vitro, sulfur can be provided by H(2)S. The sequence is that of Thiazole synthase from Escherichia coli O81 (strain ED1a).